The primary structure comprises 206 residues: FMN-dependent NADH:quinone oxidoreductase (206 aa).

FMN-binding positions include 15-17 (SVS), 94-97 (MYNF), and 138-141 (TRGG).

The protein belongs to the azoreductase type 1 family. Homodimer. FMN serves as cofactor.

It carries out the reaction 2 a quinone + NADH + H(+) = 2 a 1,4-benzosemiquinone + NAD(+). The catalysed reaction is N,N-dimethyl-1,4-phenylenediamine + anthranilate + 2 NAD(+) = 2-(4-dimethylaminophenyl)diazenylbenzoate + 2 NADH + 2 H(+). In terms of biological role, quinone reductase that provides resistance to thiol-specific stress caused by electrophilic quinones. Also exhibits azoreductase activity. Catalyzes the reductive cleavage of the azo bond in aromatic azo compounds to the corresponding amines. This is FMN-dependent NADH:quinone oxidoreductase from Sinorhizobium fredii (strain NBRC 101917 / NGR234).